We begin with the raw amino-acid sequence, 459 residues long: Polycomb protein mes-6 (459 aa).

WD repeat units lie at residues 146–186 (SVGW…CLIV), 192–231 (CHAG…VKEH), 305–346 (MHSD…GEVE), 370–409 (SGSA…ETNP), and 415–454 (VGSR…VDAK).

The protein belongs to the WD repeat ESC family. As to quaternary structure, interacts directly with the N-terminal domain of mes-2. Forms a heterotrimeric complex with mes-2 and mes-3. Does not interact with mes-4. In adults, it is predominantly expressed in the germline, and weakly expressed in intestinal cells.

Its subcellular location is the nucleus. Its function is as follows. Polycomb group (PcG) protein. PcG proteins act by forming multiprotein complexes, which are required to maintain the transcriptionally repressive state of homeotic genes throughout development. In association with the nfya-1-NF-Y complex, may play a role in repressing the expression of the homeobox protein egl-5 in tissues such as the head. PcG proteins are not required to initiate repression, but to maintain it during later stages of development. The mes-2/mes-3/mes-6 complex may participate in the global inactivation of the X chromosomes in germline cells. The complex may act via methylation of histone H3 'Lys-27', rendering chromatin heritably changed in its expressibility. This complex is required to exclude mes-4 from the inactivated X-chromosomes in germline cells. Required for small-RNA-induced H3K27 trimethylation. The protein is Polycomb protein mes-6 of Caenorhabditis elegans.